The primary structure comprises 265 residues: 3-methyl-2-oxobutanoate hydroxymethyltransferase (265 aa).

Mg(2+) contacts are provided by Asp45 and Asp84. Residues 45 to 46 (DS), Asp84, and Lys112 contribute to the 3-methyl-2-oxobutanoate site. Glu114 contacts Mg(2+). Residue Glu181 is the Proton acceptor of the active site.

This sequence belongs to the PanB family. As to quaternary structure, homodecamer; pentamer of dimers. Requires Mg(2+) as cofactor.

It localises to the cytoplasm. It catalyses the reaction 3-methyl-2-oxobutanoate + (6R)-5,10-methylene-5,6,7,8-tetrahydrofolate + H2O = 2-dehydropantoate + (6S)-5,6,7,8-tetrahydrofolate. Its pathway is cofactor biosynthesis; (R)-pantothenate biosynthesis; (R)-pantoate from 3-methyl-2-oxobutanoate: step 1/2. Its function is as follows. Catalyzes the reversible reaction in which hydroxymethyl group from 5,10-methylenetetrahydrofolate is transferred onto alpha-ketoisovalerate to form ketopantoate. This Yersinia pestis bv. Antiqua (strain Antiqua) protein is 3-methyl-2-oxobutanoate hydroxymethyltransferase.